The primary structure comprises 462 residues: MVQRAVPSIGPSLGSSAPGFGTDGIRGRAGTELSPALCLQVGYWIGRVLKADGPVLIGMDSRSSGSMLVAALTAGLTAAGRDVWELGLCATPAVPLLIREVGAAGGLMVSASHNPPADNGIKVFGADGTKLSAERQARVETGLRGEVEDDGPSRCGRSVQRQDLLRSYQDKLLSSVGDRRLNGVPIVLDLCWGSATACAAEVFQTLGADLTVLHGQPDGERINVACGSTQLDPLRQAVVAQGAVMGFAFDGDADRMLAVDARGRVVDGDHVLYLWGSVLQDQKALPGDRLVATVMSNLGFERAWERRGGELERTPVGDQHVHAAMVANGAALGGEQSGHILAASHGLCGDGVLTALQLATLCHGQDIALSDWLDRSFKAYPQKLVNVTVPDRARRKGWSSCMPLQEAVLQAEASMGAAGRVLVRASGTEPVLRVMVESEDQSLVDRWTQHLAAMADEHLNAA.

Catalysis depends on S112, which acts as the Phosphoserine intermediate. 4 residues coordinate Mg(2+): S112, D250, D252, and D254. A Phosphoserine modification is found at S112.

The protein belongs to the phosphohexose mutase family. It depends on Mg(2+) as a cofactor. Post-translationally, activated by phosphorylation.

It carries out the reaction alpha-D-glucosamine 1-phosphate = D-glucosamine 6-phosphate. In terms of biological role, catalyzes the conversion of glucosamine-6-phosphate to glucosamine-1-phosphate. The polypeptide is Phosphoglucosamine mutase (Parasynechococcus marenigrum (strain WH8102)).